The primary structure comprises 273 residues: MENRTNFFHLHLISDSTGETLISAGRAASAQFRSAQPIEHVYPLIRNRKQLLPVLQAIDDAPGIVLYTIVDRELASLIDERCVEMGVASVNVLEPVMNAFQIYLGAPSRRRVGAQHVMNAGYFARIEALNFTMDHDDGQMPDDYNDADVVIIGISRTSKTPTSIYLANRGIKTANIPIVYGVPLPESLFTTTKPLIVCLIATTDRISQVRENRILGATHGFDREHYTDRAAISEELKYARSLCARHNWPLIDVTRRSIEETAAAIVALRPKLR.

An ADP-binding site is contributed by Gly153–Thr160.

It belongs to the pyruvate, phosphate/water dikinase regulatory protein family. PDRP subfamily.

The catalysed reaction is N(tele)-phospho-L-histidyl/L-threonyl-[pyruvate, phosphate dikinase] + ADP = N(tele)-phospho-L-histidyl/O-phospho-L-threonyl-[pyruvate, phosphate dikinase] + AMP + H(+). The enzyme catalyses N(tele)-phospho-L-histidyl/O-phospho-L-threonyl-[pyruvate, phosphate dikinase] + phosphate + H(+) = N(tele)-phospho-L-histidyl/L-threonyl-[pyruvate, phosphate dikinase] + diphosphate. Bifunctional serine/threonine kinase and phosphorylase involved in the regulation of the pyruvate, phosphate dikinase (PPDK) by catalyzing its phosphorylation/dephosphorylation. This is Putative pyruvate, phosphate dikinase regulatory protein from Rhizobium leguminosarum bv. trifolii (strain WSM2304).